The chain runs to 71 residues: Large ribosomal subunit protein uL29 (71 aa).

Belongs to the universal ribosomal protein uL29 family.

The sequence is that of Large ribosomal subunit protein uL29 (rpl29) from Halobacterium salinarum (strain ATCC 700922 / JCM 11081 / NRC-1) (Halobacterium halobium).